Here is a 93-residue protein sequence, read N- to C-terminus: uncharacterized protein (93 aa).

This is an uncharacterized protein from Bacillus subtilis (strain 168).